Consider the following 262-residue polypeptide: Snake venom serine protease catroxase-1 (262 aa).

Positions M1 to A18 are cleaved as a signal peptide. Residues Q19–P24 constitute a propeptide that is removed on maturation. The 226-residue stretch at I25–A250 folds into the Peptidase S1 domain. Intrachain disulfides connect C31–C162, C49–C65, C97–C257, C141–C211, C173–C190, and C201–C226. Residue H64 is the Charge relay system of the active site. An N-linked (GlcNAc...) asparagine glycan is attached at N102. Catalysis depends on D109, which acts as the Charge relay system. An N-linked (GlcNAc...) asparagine glycan is attached at N169. S205 (charge relay system) is an active-site residue.

The protein belongs to the peptidase S1 family. Snake venom subfamily. In terms of assembly, monomer. In terms of tissue distribution, expressed by the venom gland.

It localises to the secreted. Its function is as follows. Snake venom serine protease that may act in the hemostasis system of the prey. This Crotalus atrox (Western diamondback rattlesnake) protein is Snake venom serine protease catroxase-1.